We begin with the raw amino-acid sequence, 332 residues long: Glyceraldehyde-3-phosphate dehydrogenase 1 (332 aa).

NAD(+) is bound by residues 11–12, Asp-32, and Arg-77; that span reads RI. Residues 148–150, Thr-179, 208–209, and Arg-231 each bind D-glyceraldehyde 3-phosphate; these read SCT and TG. The Nucleophile role is filled by Cys-149. Asn-313 contributes to the NAD(+) binding site.

It belongs to the glyceraldehyde-3-phosphate dehydrogenase family. As to quaternary structure, homotetramer.

The protein localises to the cytoplasm. The enzyme catalyses D-glyceraldehyde 3-phosphate + phosphate + NAD(+) = (2R)-3-phospho-glyceroyl phosphate + NADH + H(+). It functions in the pathway carbohydrate degradation; glycolysis; pyruvate from D-glyceraldehyde 3-phosphate: step 1/5. This Drosophila melanogaster (Fruit fly) protein is Glyceraldehyde-3-phosphate dehydrogenase 1 (Gapdh1).